The primary structure comprises 492 residues: Fibroblast growth factor receptor substrate 3 (492 aa).

G2 carries N-myristoyl glycine lipidation. Residues 13-115 enclose the IRS-type PTB domain; the sequence is VPDNHPTKFK…QCNSINVMEE (103 aa). Disordered stretches follow at residues 153-173, 338-455, and 467-492; these read GEGP…RHPS, QLGG…SDSY, and SNLQ…DLPL.

In terms of assembly, binds NTRK1. Binds FGFR1, NGFR, GRB2, PTPN11 and ERK2. Phosphorylated by ULK2 in vitro. Phosphorylated on tyrosine residues upon stimulation by BFGF or NGFB.

The protein resides in the membrane. In terms of biological role, adapter protein that links FGF and NGF receptors to downstream signaling pathways. Involved in the activation of MAP kinases. Down-regulates ERK2 signaling by interfering with the phosphorylation and nuclear translocation of ERK2. The protein is Fibroblast growth factor receptor substrate 3 (FRS3) of Homo sapiens (Human).